A 693-amino-acid polypeptide reads, in one-letter code: Golgin subfamily A member 6C (693 aa).

3 disordered regions span residues 20–71 (NKLA…DSQY), 497–547 (LPGE…GTEQ), and 629–693 (NPAD…MQDT). Residues 73–611 (ELAVALESSS…KLLELQELVL (539 aa)) are a coiled coil. Residues 537 to 547 (LPKEKADGTEQ) are compositionally biased toward basic and acidic residues. Over residues 679–693 (PVQQIVQLSPVMQDT) the composition is skewed to polar residues.

This sequence belongs to the GOLGA6 family.

The sequence is that of Golgin subfamily A member 6C (GOLGA6C) from Homo sapiens (Human).